Here is a 329-residue protein sequence, read N- to C-terminus: 2,3,4,5-tetrahydropyridine-2,6-dicarboxylate N-succinyltransferase (329 aa).

2 residues coordinate Mg(2+): Asp177 and Glu194. Glu210 serves as the catalytic Acyl-anhydride intermediate. Succinyl-CoA contacts are provided by residues Arg212, Gly227, Ser230, Ala253, 268-269 (EA), Gly276, Lys288, and 301-304 (RRNS).

Belongs to the type 2 tetrahydrodipicolinate N-succinyltransferase family. In terms of assembly, homotrimer.

It is found in the cytoplasm. It carries out the reaction (S)-2,3,4,5-tetrahydrodipicolinate + succinyl-CoA + H2O = (S)-2-succinylamino-6-oxoheptanedioate + CoA. The protein operates within amino-acid biosynthesis; L-lysine biosynthesis via DAP pathway; LL-2,6-diaminopimelate from (S)-tetrahydrodipicolinate (succinylase route): step 1/3. Functionally, catalyzes the conversion of the cyclic tetrahydrodipicolinate (THDP) into the acyclic N-succinyl-L-2-amino-6-oxopimelate using succinyl-CoA. This is 2,3,4,5-tetrahydropyridine-2,6-dicarboxylate N-succinyltransferase from Streptomyces coelicolor (strain ATCC BAA-471 / A3(2) / M145).